We begin with the raw amino-acid sequence, 127 residues long: Small integral membrane protein 33 (127 aa).

Asparagine 15 carries N-linked (GlcNAc...) asparagine glycosylation. Residues 38 to 58 (PLLAAIIAAFVLLAICIVLAV) traverse the membrane as a helical segment.

The protein resides in the membrane. The sequence is that of Small integral membrane protein 33 from Mus musculus (Mouse).